Consider the following 207-residue polypeptide: Small ribosomal subunit protein uS4 (207 aa).

Residues 31–56 (KCKLDSKPGQHGRTSGARTSDYGNQL) are disordered. The span at 42–53 (GRTSGARTSDYG) shows a compositional bias: polar residues. The S4 RNA-binding domain occupies 97-157 (TRLDNVVYRM…EKSKKQVRIV (61 aa)).

The protein belongs to the universal ribosomal protein uS4 family. In terms of assembly, part of the 30S ribosomal subunit. Contacts protein S5. The interaction surface between S4 and S5 is involved in control of translational fidelity.

In terms of biological role, one of the primary rRNA binding proteins, it binds directly to 16S rRNA where it nucleates assembly of the body of the 30S subunit. With S5 and S12 plays an important role in translational accuracy. The polypeptide is Small ribosomal subunit protein uS4 (Herminiimonas arsenicoxydans).